Consider the following 216-residue polypeptide: GTP cyclohydrolase 1 (216 aa).

The tract at residues 1–33 (MPQARGEGATPPTSLPNPSLKGVPLPDNPNNLE) is disordered. The span at 24 to 33 (PLPDNPNNLE) shows a compositional bias: low complexity. Zn(2+) contacts are provided by Cys102, His105, and Cys173.

Belongs to the GTP cyclohydrolase I family. Toroid-shaped homodecamer, composed of two pentamers of five dimers.

The catalysed reaction is GTP + H2O = 7,8-dihydroneopterin 3'-triphosphate + formate + H(+). The protein operates within cofactor biosynthesis; 7,8-dihydroneopterin triphosphate biosynthesis; 7,8-dihydroneopterin triphosphate from GTP: step 1/1. The chain is GTP cyclohydrolase 1 (folE) from Deinococcus radiodurans (strain ATCC 13939 / DSM 20539 / JCM 16871 / CCUG 27074 / LMG 4051 / NBRC 15346 / NCIMB 9279 / VKM B-1422 / R1).